We begin with the raw amino-acid sequence, 430 residues long: MVNLEPMHTEIKMSGDVADSTDARSTFGQVESGNDRNGLDFNRQIKTEDLGDTLQQSLSHRPCHLSQGPTMMPGNQMSGDMASLHPLQQLVLVPGHLQSVSQFLLSQTPPGQQGLQPNLLSFPQQQSTLLLPQTGPGLTSQAVGRPGLSGSSLEPHLEASQHLPGPKHLPGPGGNDEPTDLEELEKFAKTFKQRRIKLGFTQGDVGLAMGKLYGNDFSQTTISRFEALNLSFKNMCKLKPLLEKWLNDAESSPSDPSASTPSSYPTLSEVFGRKRKKRTSIETNIRLTLEKRFQDNPKPSSEEISMIAEQLSMEKEVVRVWFCNRRQKEKRINCPVATPVKPPIYNSRLVSPSGSLGSLSVPPVHSTMPGTVTSSCSPGNNSRPSSPGSGLHASSPTASQNNSKAAMNPSSAAFNSSGSWYRWNHPAYLH.

Disordered regions lie at residues 1–40 (MVNL…NGLD), 60–81 (HRPC…SGDM), 129–180 (LLLP…EPTD), and 248–267 (DAES…YPTL). Polar residues-rich tracts occupy residues 23 to 32 (ARSTFGQVES) and 67 to 78 (QGPTMMPGNQMS). Low complexity predominate over residues 129–139 (LLLPQTGPGLT). Positions 176–250 (DEPTDLEELE…LLEKWLNDAE (75 aa)) constitute a POU-specific domain. Over residues 251-267 (SSPSDPSASTPSSYPTL) the composition is skewed to low complexity. A DNA-binding region (homeobox) is located at residues 274–333 (KRKKRTSIETNIRLTLEKRFQDNPKPSSEEISMIAEQLSMEKEVVRVWFCNRRQKEKRIN). Low complexity-rich tracts occupy residues 355–364 (SLGSLSVPPV) and 374–390 (SSCS…PGSG). The segment at 355–413 (SLGSLSVPPVHSTMPGTVTSSCSPGNNSRPSSPGSGLHASSPTASQNNSKAAMNPSSAA) is disordered. Positions 392-413 (HASSPTASQNNSKAAMNPSSAA) are enriched in polar residues.

Belongs to the POU transcription factor family. Class-2 subfamily. Interacts (via the POU domain) with POU2AF1 and POU2AF2 in a DNA-dependent manner; this interaction recruits POU2AF2 to chromatin and increases POU2F3 transactivation activity. In terms of tissue distribution, expressed in epidermis and hair follicles.

Its subcellular location is the nucleus. Transcription factor that binds to the octamer motif (5'-ATTTGCAT-3') and regulates cell type-specific differentiation pathways. Involved in the regulation of keratinocytes differentiation. The POU2F3-POU2AF2/POU2AF3 complex drives the expression of tuft-cell-specific genes, a rare chemosensory cells that coordinate immune and neural functions within mucosal epithelial tissues. Functionally, inhibits transactivation by POU2F1. The polypeptide is POU domain, class 2, transcription factor 3 (Pou2f3) (Rattus norvegicus (Rat)).